The sequence spans 137 residues: Small ribosomal subunit protein bS16m (137 aa).

A mitochondrion-targeting transit peptide spans 1–34 (MVHLTTLLCKAYRGGHLTIRLALGGCTNRPFYRI). T130 is modified (phosphothreonine).

Belongs to the bacterial ribosomal protein bS16 family. In terms of assembly, component of the mitochondrial small ribosomal subunit (mt-SSU). Mature mammalian 55S mitochondrial ribosomes consist of a small (28S) and a large (39S) subunit. The 28S small subunit contains a 12S ribosomal RNA (12S mt-rRNA) and 30 different proteins. The 39S large subunit contains a 16S rRNA (16S mt-rRNA), a copy of mitochondrial valine transfer RNA (mt-tRNA(Val)), which plays an integral structural role, and 52 different proteins. bS16m has a zinc binding site.

The protein localises to the mitochondrion. This Homo sapiens (Human) protein is Small ribosomal subunit protein bS16m (MRPS16).